We begin with the raw amino-acid sequence, 83 residues long: uncharacterized protein (83 aa).

3 helical membrane-spanning segments follow: residues 7-26 (FARF…IVSY), 36-58 (LSPL…ILPF), and 65-82 (ILTV…YLAF).

It localises to the cell membrane. This is an uncharacterized protein from Archaeoglobus fulgidus (strain ATCC 49558 / DSM 4304 / JCM 9628 / NBRC 100126 / VC-16).